The primary structure comprises 288 residues: 2-dehydro-3-deoxyphosphooctonate aldolase (288 aa).

The protein belongs to the KdsA family.

The protein localises to the cytoplasm. It catalyses the reaction D-arabinose 5-phosphate + phosphoenolpyruvate + H2O = 3-deoxy-alpha-D-manno-2-octulosonate-8-phosphate + phosphate. It participates in carbohydrate biosynthesis; 3-deoxy-D-manno-octulosonate biosynthesis; 3-deoxy-D-manno-octulosonate from D-ribulose 5-phosphate: step 2/3. Its pathway is bacterial outer membrane biogenesis; lipopolysaccharide biosynthesis. In Bdellovibrio bacteriovorus (strain ATCC 15356 / DSM 50701 / NCIMB 9529 / HD100), this protein is 2-dehydro-3-deoxyphosphooctonate aldolase.